Here is a 239-residue protein sequence, read N- to C-terminus: MNVENQTPNVDHQEIAKFEAIASRWWDLEGEFKPLHRINPLRLGYISQRAEGLFGKKVLDVGCGGGILAESMAREGADVTGLDMGAEPLQVARLHALESGVAVNYVQETVEAHAQAHPGLYDVVTCMEMLEHVPDPQSVVQACAKLVKPGGHVFFSTINRNAKAWMMAVIGAEYVLKMVPRGTHDIKKFIRPAELMHWVDSTPLREKHITGLHYNPLTDHFKLGPNVDVNYMLHTRHDK.

S-adenosyl-L-methionine is bound by residues arginine 42, glycine 62, aspartate 83, and methionine 127.

This sequence belongs to the methyltransferase superfamily. UbiG/COQ3 family.

The enzyme catalyses a 3-demethylubiquinol + S-adenosyl-L-methionine = a ubiquinol + S-adenosyl-L-homocysteine + H(+). It catalyses the reaction a 3-(all-trans-polyprenyl)benzene-1,2-diol + S-adenosyl-L-methionine = a 2-methoxy-6-(all-trans-polyprenyl)phenol + S-adenosyl-L-homocysteine + H(+). It functions in the pathway cofactor biosynthesis; ubiquinone biosynthesis. Functionally, O-methyltransferase that catalyzes the 2 O-methylation steps in the ubiquinone biosynthetic pathway. This Pectobacterium carotovorum subsp. carotovorum (strain PC1) protein is Ubiquinone biosynthesis O-methyltransferase.